The chain runs to 227 residues: MGPLHQFLLLLITALSQALNTTVLQGMAGQSLRVSCTYDALKHWGRRKAWCRQLGEEGPCQRVVSTHGVWLLAFLKKRNGSTVIADDTLAGTVTITLKNLQAGDAGLYQCQSLRGREAEVLQKVLVEVLEDPLDDQDAGDLWVPEESSSFEGAQVEHSTSRNQETSFPPTSILLLLACVLLSKFLAASILWAVARGRQKPGTPVVRGLDCGQDAGHQLQILTGPGGT.

The first 18 residues, 1-18 (MGPLHQFLLLLITALSQA), serve as a signal peptide directing secretion. Residues 19–171 (LNTTVLQGMA…NQETSFPPTS (153 aa)) are Extracellular-facing. Asparagine 20 carries N-linked (GlcNAc...) asparagine glycosylation. Residues 29-112 (GQSLRVSCTY…GDAGLYQCQS (84 aa)) form the Ig-like V-type domain. Intrachain disulfides connect cysteine 36–cysteine 110 and cysteine 51–cysteine 60. Histidine 67 is an a 1,2-diacyl-sn-glycero-3-phospho-L-serine binding site. Asparagine 79 carries N-linked (GlcNAc...) asparagine glycosylation. An a 1,2-diacyl-sn-glycero-3-phospho-L-serine-binding site is contributed by threonine 88. The helical transmembrane segment at 172 to 192 (ILLLLACVLLSKFLAASILWA) threads the bilayer. Residues 193 to 227 (VARGRQKPGTPVVRGLDCGQDAGHQLQILTGPGGT) are Cytoplasmic-facing.

As to quaternary structure, monomer. After ectodomain shedding, the extracellular domain oligomerizes, which is enhanced and stabilized by binding of phosphatidylserine. Interacts with TYROBP/DAP12. Interaction with TYROBP is required for stabilization of the TREM2 C-terminal fragment (TREM2-CTF) which is produced by proteolytic processing. Interacts with PLXNA1 (via TIG domains); the interaction mediates SEMA6D binding and signaling through TYROBP. In terms of processing, undergoes ectodomain shedding through proteolytic cleavage by ADAM10 and ADAM17 to produce a transmembrane segment, the TREM2 C-terminal fragment (TREM2-CTF), which is subsequently cleaved by gamma-secretase. Expressed in the brain, specifically in microglia (at protein level). Expressed in macrophages (at protein level). Expressed at higher levels in the CNS, heart and lung than in lymph nodes or in other non-lymphoid tissues such as kidney, liver and testis. In the CNS not all microglia express TREM2. Brain regions with an incomplete blood-brain barrier had the lowest percentages of TREM2 expressing microglia, whereas the lateral entorhinal and cingulate cortex had the highest percentages.

The protein localises to the cell membrane. The protein resides in the secreted. Forms a receptor signaling complex with TYROBP which mediates signaling and cell activation following ligand binding. Acts as a receptor for amyloid-beta protein 42, a cleavage product of the amyloid-beta precursor protein APP, and mediates its uptake and degradation by microglia. Binding to amyloid-beta 42 mediates microglial activation, proliferation, migration, apoptosis and expression of pro-inflammatory cytokines, such as IL6R and CCL3, and the anti-inflammatory cytokine ARG1. Acts as a receptor for lipoprotein particles such as LDL, VLDL, and HDL and for apolipoproteins such as APOA1, APOA2, APOB, APOE, APOE2, APOE3, APOE4, and CLU and enhances their uptake in microglia. Binds phospholipids (preferably anionic lipids) such as phosphatidylserine, phosphatidylethanolamine, phosphatidylglycerol and sphingomyelin. Regulates microglial proliferation by acting as an upstream regulator of the Wnt/beta-catenin signaling cascade. Required for microglial phagocytosis of apoptotic neurons. Also required for microglial activation and phagocytosis of myelin debris after neuronal injury and of neuronal synapses during synapse elimination in the developing brain. Regulates microglial chemotaxis and process outgrowth, and also the microglial response to oxidative stress and lipopolysaccharide. It suppresses PI3K and NF-kappa-B signaling in response to lipopolysaccharide; thus promoting phagocytosis, suppressing pro-inflammatory cytokine and nitric oxide production, inhibiting apoptosis and increasing expression of IL10 and TGFB. During oxidative stress, it promotes anti-apoptotic NF-kappa-B signaling and ERK signaling. Plays a role in microglial MTOR activation and metabolism. Regulates age-related changes in microglial numbers. Triggers activation of the immune responses in macrophages and dendritic cells. Mediates cytokine-induced formation of multinucleated giant cells which are formed by the fusion of macrophages. In dendritic cells, receptor of SEMA6D with PLEXNA1 as coreceptor and mediates up-regulation of chemokine receptor CCR7 and dendritic cell maturation and survival. Involved in the positive regulation of osteoclast differentiation. This is Triggering receptor expressed on myeloid cells 2 (Trem2) from Mus musculus (Mouse).